The following is a 217-amino-acid chain: Small ribosomal subunit protein uS2 (217 aa).

It belongs to the universal ribosomal protein uS2 family.

This chain is Small ribosomal subunit protein uS2, found in Korarchaeum cryptofilum (strain OPF8).